The sequence spans 302 residues: Ribosomal RNA small subunit methyltransferase H (302 aa).

S-adenosyl-L-methionine is bound by residues 36 to 38, D56, F84, D99, and Q106; that span reads GGH.

Belongs to the methyltransferase superfamily. RsmH family.

Its subcellular location is the cytoplasm. It carries out the reaction cytidine(1402) in 16S rRNA + S-adenosyl-L-methionine = N(4)-methylcytidine(1402) in 16S rRNA + S-adenosyl-L-homocysteine + H(+). Functionally, specifically methylates the N4 position of cytidine in position 1402 (C1402) of 16S rRNA. This chain is Ribosomal RNA small subunit methyltransferase H, found in Christiangramia forsetii (strain DSM 17595 / CGMCC 1.15422 / KT0803) (Gramella forsetii).